The primary structure comprises 88 residues: Class II hydrophobin 5 (88 aa).

Residues 1-14 (MQFLVLALASLAAA) form the signal peptide. Cystine bridges form between cysteine 27-cysteine 73, cysteine 35-cysteine 64, cysteine 36-cysteine 48, and cysteine 74-cysteine 85.

The protein belongs to the cerato-ulmin hydrophobin family. In terms of assembly, homotetramer. Further self-assembles to form highly ordered films at water-air interfaces through intermolecular interactions. As to expression, only appears on young aerial hyphae. HCf-5 is the most abundant transcript in sporulating mycelium.

The protein resides in the secreted. Its subcellular location is the cell wall. Functionally, aerial growth, conidiation, and dispersal of filamentous fungi in the environment rely upon a capability of their secreting small amphipathic proteins called hydrophobins (HPBs) with low sequence identity. Class I can self-assemble into an outermost layer of rodlet bundles on aerial cell surfaces, conferring cellular hydrophobicity that supports fungal growth, development and dispersal; whereas Class II form highly ordered films at water-air interfaces through intermolecular interactions but contribute nothing to the rodlet structure. The sequence is that of Class II hydrophobin 5 from Passalora fulva (Tomato leaf mold).